We begin with the raw amino-acid sequence, 153 residues long: Insulin-like growth factor 1 (153 aa).

The b stretch occupies residues 49–77 (GPETLCGAELVDALQFVCGDRGFYFNKPT). Intrachain disulfides connect Cys54/Cys96, Cys66/Cys109, and Cys95/Cys100. The segment at 78–89 (GYGSSSRRAPQT) is c. Residues 90 to 110 (GIVDECCFRSCDLRRLEMYCA) are a. The interval 111–118 (PLKPAKSA) is d. The propeptide at 119–153 (RSVRAQRHTDMPKAQKEVHLKNASRGSAGNKNYRM) is e peptide. Residues 120–153 (SVRAQRHTDMPKAQKEVHLKNASRGSAGNKNYRM) form a disordered region. Positions 125 to 138 (RHTDMPKAQKEVHL) are enriched in basic and acidic residues. Residues 142–153 (SRGSAGNKNYRM) show a composition bias toward polar residues.

It belongs to the insulin family. Forms a ternary complex with IGFR1 and ITGAV:ITGB3. Forms a ternary complex with IGFR1 and ITGA6:ITGB4. Forms a ternary complex with IGFBP3 and ALS.

It localises to the secreted. In terms of biological role, the insulin-like growth factors, isolated from plasma, are structurally and functionally related to insulin but have a much higher growth-promoting activity. May be a physiological regulator of [1-14C]-2-deoxy-D-glucose (2DG) transport and glycogen synthesis in osteoblasts. Stimulates glucose transport in bone-derived osteoblastic (PyMS) cells and is effective at much lower concentrations than insulin, not only regarding glycogen and DNA synthesis but also with regard to enhancing glucose uptake. May play a role in synapse maturation. Ca(2+)-dependent exocytosis of IGF1 is required for sensory perception of smell in the olfactory bulb. Acts as a ligand for IGF1R. Binds to the alpha subunit of IGF1R, leading to the activation of the intrinsic tyrosine kinase activity which autophosphorylates tyrosine residues in the beta subunit thus initiating a cascade of down-stream signaling events leading to activation of the PI3K-AKT/PKB and the Ras-MAPK pathways. Binds to integrins ITGAV:ITGB3 and ITGA6:ITGB4. Its binding to integrins and subsequent ternary complex formation with integrins and IGFR1 are essential for IGF1 signaling. Induces the phosphorylation and activation of IGFR1, MAPK3/ERK1, MAPK1/ERK2 and AKT1. As part of the MAPK/ERK signaling pathway, acts as a negative regulator of apoptosis in cardiomyocytes via promotion of STUB1/CHIP-mediated ubiquitination and degradation of ICER-type isoforms of CREM. This Rhinopithecus roxellana (Golden snub-nosed monkey) protein is Insulin-like growth factor 1.